The sequence spans 77 residues: Putative defensin-like protein 30 (77 aa).

A signal peptide spans 1-26 (MASSSKCAFLVFLCMIVLLAPSEVHA). 3 disulfides stabilise this stretch: Cys43–Cys63, Cys49–Cys72, and Cys53–Cys74.

The protein belongs to the DEFL family.

The protein resides in the secreted. The sequence is that of Putative defensin-like protein 30 from Arabidopsis thaliana (Mouse-ear cress).